Consider the following 483-residue polypeptide: Protein DETOXIFICATION 6 (483 aa).

The next 12 membrane-spanning stretches (helical) occupy residues 38–58 (ALPM…SVMV), 69–89 (GVAL…FGLA), 113–133 (FSAI…WFYM), 146–166 (ISKV…AQAV), 187–207 (AITT…AFGL), 211–231 (GAAL…ALYV), 263–283 (AAMT…SGLL), 292–312 (VLSI…GIGA), 334–354 (VFAG…LLFI), 376–396 (LSPL…LGGV), 405–425 (IGAW…GLFL), and 436–456 (LWIG…IVTA).

Belongs to the multi antimicrobial extrusion (MATE) (TC 2.A.66.1) family.

The protein resides in the membrane. The polypeptide is Protein DETOXIFICATION 6 (Arabidopsis thaliana (Mouse-ear cress)).